The primary structure comprises 901 residues: MLIPSKLSRPVRLDHTVVRERLLAKLSGANNFRLALITSPAGYGKTTLISQWAAGKNDIGWYSLDEGDNQQERFASYLIAAVQQATNGHCAICETMAQKRQYASLTSLFAQLFIELAEWHSPLYLVIDDYHLITNPVIHESMRFFIRHQPENLTLVVLSRNLPQLGIANLRVRDQLLEIGSQQLAFTHQEAKQFFDCRLSSPIEAAESSRICDDVSGWATALQLIALSARQNTHSAHKSARRLAGINASHLSDYLVDEVLDNVDLATRHFLLKSAILRSMNDALITRVTGEENGQMRLEEIERQGLFLQRMDDTGEWFCYHPLFGNFLRQRCQWELAAELPEIHRAAAESWMAQGFPSEAIHHALAAGDALMLRDILLNHAWSLFNHSELSLLEESLKALPWDSLLENPQLVLLQAWLMQSQHRYGEVNTLLARAEHEIKDIREDTMHAEFNALRAQVAINDGNPDEAERLAKLALEELPPGWFYSRIVATSVLGEVLHCKGELTRSLALMQQTEQMARQHDVWHYALWSLIQQSEILFAQGFLQTAWETQEKAFQLINEQHLEQLPMHEFLVRIRAQLLWAWARLDEAEASARRGIEVLSSYQPQQQLQCLAMLIQCSLARGDLDNARSQLNRLENLLGNGKYHSDWISNANKVRVIYWQMTGDKAAAANWLRHTAKPEFANNHFLQGQWRNIARAQILLGEFEPAEIVLEELNENARSLRLMSDLNRNLLLLNQLYWQAGRKSDAQRVLLDALKLANRTGFISHFVIEGEAMAQQLRQLIQLNTLPELEQHRAQRILREINQHHRHKFAHFDENFVERLLNHPEVPELIRTSPLTQREWQVLGLIYSGYSNEQIAGELEVAATTIKTHIRNLYQKLGVAHRQDAVQHAQQLLKMMGYGV.

39–46 (SPAGYGKT) is a binding site for ATP. One can recognise an HTH luxR-type domain in the interval 829 to 894 (ELIRTSPLTQ…DAVQHAQQLL (66 aa)). A DNA-binding region (H-T-H motif) is located at residues 853–872 (NEQIAGELEVAATTIKTHIR).

This sequence belongs to the MalT family. Monomer in solution. Oligomerizes to an active state in the presence of the positive effectors ATP and maltotriose.

Activated by ATP and maltotriose, which are both required for DNA binding. Positively regulates the transcription of the maltose regulon whose gene products are responsible for uptake and catabolism of malto-oligosaccharides. Specifically binds to the promoter region of its target genes, recognizing a short DNA motif called the MalT box. The sequence is that of HTH-type transcriptional regulator MalT from Escherichia coli (strain ATCC 8739 / DSM 1576 / NBRC 3972 / NCIMB 8545 / WDCM 00012 / Crooks).